We begin with the raw amino-acid sequence, 367 residues long: MEAVRSTTTLSNFHLLNILVLRSLKPLHRLSFSFSASAMESDASCSLVLCGKSSVETEVAKGLKNKNSLKLPDNTKVSLILESEAKNLVKDDDNSFNLSLFMNSIITHRFGRFLIWSPRLSSTHDVVSHNFSELPVGSVCVTDIQFKGRGRTKNVWESPKGCLMYSFTLEMEDGRVVPLIQYVVSLAVTEAVKDVCDKKGLPYIDVKIKWPNDLYVNGLKVGGILCTSTYRSKKFNVSVGVGLNVDNGQPTTCLNAVLKGMAPESNLLKREEILGAFFHKFEKFFDLFMDQGFKSLEELYYRTWLHSEQRVIVEDKVEDQVVQNVVTIQGLTSSGYLLAVGDDNQMYELHPDGNSFDFFKGLVRRKI.

A chloroplast-targeting transit peptide spans 1–37 (MEAVRSTTTLSNFHLLNILVLRSLKPLHRLSFSFSAS). One can recognise a BPL/LPL catalytic domain in the interval 105-289 (IITHRFGRFL…KFEKFFDLFM (185 aa)). Biotin contacts are provided by residues 122–124 (STH), glutamine 145, 149–151 (RGR), and lysine 220.

Belongs to the biotin--protein ligase family. Expressed in roots, leaves, stems, flowers, siliques and seeds.

It localises to the plastid. Its subcellular location is the chloroplast. The protein localises to the cytoplasm. It is found in the cytosol. It carries out the reaction apo-[3-methylcrotonoyl-CoA:carbon-dioxide ligase (ADP-forming)] + biotin + ATP = holo-[3-methylcrotonoyl-CoA:carbon-dioxide ligase (ADP-forming)] + AMP + diphosphate + H(+). The enzyme catalyses biotin + L-lysyl-[protein] + ATP = N(6)-biotinyl-L-lysyl-[protein] + AMP + diphosphate + H(+). Functionally, plays a major role in biotin-dependent carboxylase biotinylation. Catalyzes the addition of biotin to the biotin carboxyl carrier protein (BCCP) subunit of acetyl-CoA carboxylase. Can also biotinylate methylcrotonyl-CoA carboxylase. Is responsible for most, if not all, biotin--protein ligase activity in Arabidopsis. Is essential for plant viability and required for ovule development. This is Biotin--protein ligase 1, chloroplastic from Arabidopsis thaliana (Mouse-ear cress).